A 219-amino-acid polypeptide reads, in one-letter code: 7-cyano-7-deazaguanine synthase (219 aa).

An ATP-binding site is contributed by 10 to 20 (FSGGQDSTTCL). The Zn(2+) site is built by Cys-188, Cys-197, Cys-200, and Cys-203.

It belongs to the QueC family. Zn(2+) is required as a cofactor.

The enzyme catalyses 7-carboxy-7-deazaguanine + NH4(+) + ATP = 7-cyano-7-deazaguanine + ADP + phosphate + H2O + H(+). It participates in purine metabolism; 7-cyano-7-deazaguanine biosynthesis. Catalyzes the ATP-dependent conversion of 7-carboxy-7-deazaguanine (CDG) to 7-cyano-7-deazaguanine (preQ(0)). The polypeptide is 7-cyano-7-deazaguanine synthase (Bacteroides fragilis (strain ATCC 25285 / DSM 2151 / CCUG 4856 / JCM 11019 / LMG 10263 / NCTC 9343 / Onslow / VPI 2553 / EN-2)).